Reading from the N-terminus, the 107-residue chain is Anti-adapter protein IraM (107 aa).

The protein belongs to the IraM/RssC family.

Its subcellular location is the cytoplasm. Inhibits RpoS proteolysis by regulating RssB activity, thereby increasing the stability of the sigma stress factor RpoS during magnesium starvation. This is Anti-adapter protein IraM from Shigella dysenteriae serotype 1 (strain Sd197).